We begin with the raw amino-acid sequence, 228 residues long: tRNA (guanine-N(1)-)-methyltransferase (228 aa).

Residues Gly-111 and 135-140 (LGDYVL) each bind S-adenosyl-L-methionine.

It belongs to the RNA methyltransferase TrmD family. In terms of assembly, homodimer.

Its subcellular location is the cytoplasm. The enzyme catalyses guanosine(37) in tRNA + S-adenosyl-L-methionine = N(1)-methylguanosine(37) in tRNA + S-adenosyl-L-homocysteine + H(+). Specifically methylates guanosine-37 in various tRNAs. The polypeptide is tRNA (guanine-N(1)-)-methyltransferase (Clavibacter sepedonicus (Clavibacter michiganensis subsp. sepedonicus)).